A 315-amino-acid polypeptide reads, in one-letter code: Methionyl-tRNA formyltransferase (315 aa).

Residue 112–115 participates in (6S)-5,6,7,8-tetrahydrofolate binding; it reads SLLP.

Belongs to the Fmt family.

It carries out the reaction L-methionyl-tRNA(fMet) + (6R)-10-formyltetrahydrofolate = N-formyl-L-methionyl-tRNA(fMet) + (6S)-5,6,7,8-tetrahydrofolate + H(+). Its function is as follows. Attaches a formyl group to the free amino group of methionyl-tRNA(fMet). The formyl group appears to play a dual role in the initiator identity of N-formylmethionyl-tRNA by promoting its recognition by IF2 and preventing the misappropriation of this tRNA by the elongation apparatus. The chain is Methionyl-tRNA formyltransferase from Rhizobium rhizogenes (strain K84 / ATCC BAA-868) (Agrobacterium radiobacter).